We begin with the raw amino-acid sequence, 68 residues long: Conotoxin Mr3.4 (68 aa).

An N-terminal signal peptide occupies residues 1-19; sequence MSKLGVLLTICLLLFPLTA. Positions 20-49 are excised as a propeptide; the sequence is VPLDGDQPADRPAERMQDDISSERHPFFDR. 3 cysteine pairs are disulfide-bonded: C53–C67, C54–C63, and C59–C66. The residue at position 65 (P65) is a 4-hydroxyproline.

This sequence belongs to the conotoxin M superfamily. Expressed by the venom duct.

The protein resides in the secreted. In Conus marmoreus (Marble cone), this protein is Conotoxin Mr3.4.